Consider the following 273-residue polypeptide: Endoplasmic reticulum resident protein 27 (273 aa).

The N-terminal stretch at 1 to 25 is a signal peptide; the sequence is MEAAPSRFMFLLFLLTCELAAEVAA. A Thioredoxin domain is found at 39-152; that stretch reads EPTWLTDVPA…MVTEYNPVTV (114 aa). An N-linked (GlcNAc...) asparagine glycan is attached at asparagine 100. Residues 230 to 233 form a PDIA3-binding site region; that stretch reads DEWD. A Prevents secretion from ER motif is present at residues 270–273; it reads KVEL.

This sequence belongs to the protein disulfide isomerase family. Interacts with PDIA3.

It is found in the endoplasmic reticulum lumen. Its function is as follows. Specifically binds unfolded proteins and may recruit protein disulfide isomerase PDIA3 to unfolded substrates. Binds protein substrates via a hydrophobic pocket in the C-terminal domain. May play a role in the unfolded stress response. This Homo sapiens (Human) protein is Endoplasmic reticulum resident protein 27 (ERP27).